The primary structure comprises 275 residues: Formamidopyrimidine-DNA glycosylase (275 aa).

Catalysis depends on proline 2, which acts as the Schiff-base intermediate with DNA. Residue glutamate 3 is the Proton donor of the active site. The Proton donor; for beta-elimination activity role is filled by lysine 58. The DNA site is built by histidine 92, arginine 111, and arginine 154. Residues 239–273 (HVYHRQGLPCQRCGTPIERIKVAQRGTHFCPHCQV) form an FPG-type zinc finger. The active-site Proton donor; for delta-elimination activity is the arginine 263.

Belongs to the FPG family. In terms of assembly, monomer. Requires Zn(2+) as cofactor.

It catalyses the reaction Hydrolysis of DNA containing ring-opened 7-methylguanine residues, releasing 2,6-diamino-4-hydroxy-5-(N-methyl)formamidopyrimidine.. The enzyme catalyses 2'-deoxyribonucleotide-(2'-deoxyribose 5'-phosphate)-2'-deoxyribonucleotide-DNA = a 3'-end 2'-deoxyribonucleotide-(2,3-dehydro-2,3-deoxyribose 5'-phosphate)-DNA + a 5'-end 5'-phospho-2'-deoxyribonucleoside-DNA + H(+). In terms of biological role, involved in base excision repair of DNA damaged by oxidation or by mutagenic agents. Acts as a DNA glycosylase that recognizes and removes damaged bases. Has a preference for oxidized purines, such as 7,8-dihydro-8-oxoguanine (8-oxoG). Has AP (apurinic/apyrimidinic) lyase activity and introduces nicks in the DNA strand. Cleaves the DNA backbone by beta-delta elimination to generate a single-strand break at the site of the removed base with both 3'- and 5'-phosphates. This is Formamidopyrimidine-DNA glycosylase from Pediococcus pentosaceus (strain ATCC 25745 / CCUG 21536 / LMG 10740 / 183-1w).